The chain runs to 392 residues: p21-activated protein kinase-interacting protein 1 (392 aa).

5 WD repeats span residues 40–77 (AHTA…DHGA), 80–118 (HHNG…CLKS), 121–160 (AHKG…SAFI), 202–240 (TNER…CLSE), and 243–284 (AHEN…KVSP). The segment at 309-392 (TKESPPAAAE…RKKKKIRMMQ (84 aa)) is disordered. The span at 325-351 (EQSRRNKEESGHAVQEEEKQPKPDTEK) shows a compositional bias: basic and acidic residues. Over residues 355-368 (TGDSNKPTRGNSLV) the composition is skewed to polar residues. Residues 381–392 (KKRKKKKIRMMQ) show a composition bias toward basic residues.

In terms of assembly, interacts with PAK1.

The protein localises to the nucleus. It is found in the nucleolus. Functionally, negatively regulates the PAK1 kinase. PAK1 is a member of the PAK kinase family, which has been shown to play a positive role in the regulation of signaling pathways involving MAPK8 and RELA. PAK1 exists as an inactive homodimer, which is activated by binding of small GTPases such as CDC42 to an N-terminal regulatory domain. PAK1IP1 also binds to the N-terminus of PAK1, and inhibits the specific activation of PAK1 by CDC42. May be involved in ribosomal large subunit assembly. This is p21-activated protein kinase-interacting protein 1 (PAK1IP1) from Bos taurus (Bovine).